The following is a 1389-amino-acid chain: MEVLMAERANLVFHNKAIDGTAMKRLISRLIEHFGMAYTSHILDQVKTLGFQQATATSISLGIDDLLTIPSKGWLVQDAEQQSLILEKHHHYGNVHAVEKLRQSIEIWYATSEYLRQEMNPNFRMTDPFNPVHIMSFSGARGNASQVHQLVGMRGLMSDPQGQMIDLPIQSNLREGLSLTEYIISCYGARKGVVDTAVRTSDAGYLTRRLVEVVQHIVVRRTDCGTARGISVSPRNGMMPERIFSQTLIGRVLADDIYMGPRCIATRNQDIGIGLVNRFITFRAQPISIRTPFTCRSTSWICRLCYGRSPTHGDLVELGEAVGIIAGQSIGEPGTQLTLRTFHTGGVFTGGTAEHVRAPSNGKIKFNEDLVHPTRTRHGHPAFLCSIDLYVTIESEDILHNVNIPPKSLLLVQNDQYVESEQVIAEIRAGISTLNFKEKVRKHIYSDSDGEMHWSTDVYHAPEFTYGNVHLLPKTSHLWILLGGPCKSSLVYLSIHKDQDQMNAHSLSGKQRYTSNLSVTNDQARQKLFSSGFSGKKEDRIPDYSDLNRIICTGQYNLVYSPILHENSDLLSKRRRNKFIIPLHSIQELENELMPCSGISIEIPVNGIFRRNSILAYFDDPRYRRKSSGIIKYGTIETHSVIKKEDLIEYRGVKEFRPKYQMKVDRFFFIPEEVHILPGSSSIMVRNNSIVGVDTQITLNLRSRVGGLVRVERKKKRIELKIFSGDIHFPGETDKISRHTGLLIPPGTGKINSKESKKVKKWIYVQRITPSKKKFFVLVRPVVTYEITDGINFETLFPPDPLQERDNVQLRIVNYILYGNGKPIRGISDTSIQLVRTCLVLNWNQDKKSSSCEEARASFVEIRTNGLIRHFLRINLVKSPISYIGKRNDPSGSGLLSDNGSDCTNINPFSSIYSYSKAKIQQSLNQPQGTIHTLLNRNKECQSLIILSSANCSRMGTLKYHSVIKDSIKKDPLIPIRNSLGPLGTCLPIENFYSSYRLITHNQILVTNYLQLDNLKQTFQVIKFKYYLMDENGKIFNPDPCRNIILNPFNLNWYFLHHNYCEETSKIISLGQFICENVCIAKNGPPLKSGQVILVQVDSIVIRSAKPYLATPGATVHGHYGETLYEGDTLVTFIYEKSRSGDITQGLPKVEQVLEVRSIDSISMNLEKRVEGWNKCITRILGIPWGFLIGAELTIAQSRISLVNKIQQVYRSQGVQIHNRHIEIIVRQITSKVLVSEDGMSNVFSPGELIGLLRAERMGRALEEAICYRVVLLGITRASLNTQSFISEASFQETARVLAKAALRGRIDWLKGLKENVVLGGVIPVGTGFKGLVHPSKQHNNIPLETKKKNLFEGEMRDILFHHRKLFDSCLSKKFHDIPEQSFIGFNDS.

Residues cysteine 224, cysteine 295, cysteine 302, and cysteine 305 each contribute to the Zn(2+) site.

This sequence belongs to the RNA polymerase beta' chain family. RpoC2 subfamily. As to quaternary structure, in plastids the minimal PEP RNA polymerase catalytic core is composed of four subunits: alpha, beta, beta', and beta''. When a (nuclear-encoded) sigma factor is associated with the core the holoenzyme is formed, which can initiate transcription. The cofactor is Zn(2+).

The protein resides in the plastid. It localises to the chloroplast. The enzyme catalyses RNA(n) + a ribonucleoside 5'-triphosphate = RNA(n+1) + diphosphate. DNA-dependent RNA polymerase catalyzes the transcription of DNA into RNA using the four ribonucleoside triphosphates as substrates. This is DNA-directed RNA polymerase subunit beta'' from Atropa belladonna (Belladonna).